The chain runs to 138 residues: Small ribosomal subunit protein uS11c (138 aa).

The interval 1 to 24 is disordered; it reads MIKPIPRISSRRNGRIGSRKTGRR. Residues 9–24 show a composition bias toward basic residues; it reads SSRRNGRIGSRKTGRR.

The protein belongs to the universal ribosomal protein uS11 family. In terms of assembly, part of the 30S ribosomal subunit.

It localises to the plastid. The protein localises to the chloroplast. This chain is Small ribosomal subunit protein uS11c, found in Lemna minor (Common duckweed).